A 783-amino-acid polypeptide reads, in one-letter code: NADH-quinone oxidoreductase subunit 3 (783 aa).

The 99-residue stretch at 1-99 folds into the 2Fe-2S ferredoxin-type domain; sequence MVRVKVNDRI…GMVVDTLSDV (99 aa). Cys-34, Cys-45, Cys-48, and Cys-83 together coordinate [2Fe-2S] cluster. Residues 99 to 138 enclose the 4Fe-4S His(Cys)3-ligated-type domain; that stretch reads VVREAQAGMVEFTLLNHPLDCPTCDKGGACELQDRTVEYG. [4Fe-4S] cluster-binding residues include His-115, Cys-119, Cys-122, Cys-128, Cys-181, Cys-184, Cys-187, Cys-230, Cys-256, Cys-259, Cys-263, and Cys-291. The 4Fe-4S Mo/W bis-MGD-type domain maps to 249-305; it reads MEETPTTCALCPVGCGITADTRSGELLRIRAREVPEVNEIWICDAGRFGHEWADQNR.

It belongs to the complex I 75 kDa subunit family. NDH-1 is composed of 15 different subunits, Nqo1 to Nqo15. The complex has a L-shaped structure, with the hydrophobic arm (subunits Nqo7, Nqo8 and Nqo10 to Nqo14) embedded in the membrane and the hydrophilic peripheral arm (subunits Nqo1 to Nqo6, Nqo9 and Nqo15) protruding into the bacterial cytoplasm. The hydrophilic domain contains all the redox centers. It depends on [2Fe-2S] cluster as a cofactor. [4Fe-4S] cluster is required as a cofactor.

It localises to the cell membrane. The enzyme catalyses a quinone + NADH + 5 H(+)(in) = a quinol + NAD(+) + 4 H(+)(out). NDH-1 shuttles electrons from NADH, via FMN and iron-sulfur (Fe-S) centers, to quinones in the respiratory chain. The immediate electron acceptor for the enzyme in this species is menaquinone. Couples the redox reaction to proton translocation (for every two electrons transferred, four hydrogen ions are translocated across the cytoplasmic membrane), and thus conserves the redox energy in a proton gradient required for the synthesis of ATP. The chain is NADH-quinone oxidoreductase subunit 3 (nqo3) from Thermus thermophilus (strain ATCC 27634 / DSM 579 / HB8).